The following is a 158-amino-acid chain: 6,7-dimethyl-8-ribityllumazine synthase (158 aa).

5-amino-6-(D-ribitylamino)uracil is bound by residues F23, 61–63 (SFE), and 85–87 (AVI). 90–91 (DT) lines the (2S)-2-hydroxy-3-oxobutyl phosphate pocket. Catalysis depends on H93, which acts as the Proton donor. 5-amino-6-(D-ribitylamino)uracil is bound at residue F118. A (2S)-2-hydroxy-3-oxobutyl phosphate-binding site is contributed by R132.

Belongs to the DMRL synthase family.

It carries out the reaction (2S)-2-hydroxy-3-oxobutyl phosphate + 5-amino-6-(D-ribitylamino)uracil = 6,7-dimethyl-8-(1-D-ribityl)lumazine + phosphate + 2 H2O + H(+). Its pathway is cofactor biosynthesis; riboflavin biosynthesis; riboflavin from 2-hydroxy-3-oxobutyl phosphate and 5-amino-6-(D-ribitylamino)uracil: step 1/2. In terms of biological role, catalyzes the formation of 6,7-dimethyl-8-ribityllumazine by condensation of 5-amino-6-(D-ribitylamino)uracil with 3,4-dihydroxy-2-butanone 4-phosphate. This is the penultimate step in the biosynthesis of riboflavin. The polypeptide is 6,7-dimethyl-8-ribityllumazine synthase (Prochlorococcus marinus (strain NATL2A)).